Consider the following 116-residue polypeptide: Large ribosomal subunit protein uL18 (116 aa).

Belongs to the universal ribosomal protein uL18 family. In terms of assembly, part of the 50S ribosomal subunit; part of the 5S rRNA/L5/L18/L25 subcomplex. Contacts the 5S and 23S rRNAs.

This is one of the proteins that bind and probably mediate the attachment of the 5S RNA into the large ribosomal subunit, where it forms part of the central protuberance. This is Large ribosomal subunit protein uL18 from Novosphingobium aromaticivorans (strain ATCC 700278 / DSM 12444 / CCUG 56034 / CIP 105152 / NBRC 16084 / F199).